The following is a 200-amino-acid chain: MKRVNVILAGGASRRFGEPKAFAKWKGGMFYEQAKKAFGGGETVIISRPEHIKKFLSNRERHVLADEPRFRGMGPLAGIYTAMKQTEGETFTVISCDTPLVTRKTMVALEMKLTGNLDAVIPVCKNREQPLLAVYHKRVQDVLFDQLTQNKLKMTDTLKRLSVCYVQAEDIGAGPEEFANINTQDDYTRLLAHVESSNQD.

Residues Leu8–Gly10, Lys20, Asp66, and Asp97 each bind GTP. Residue Asp97 coordinates Mg(2+).

Belongs to the MobA family. Mg(2+) serves as cofactor.

The protein localises to the cytoplasm. It catalyses the reaction Mo-molybdopterin + GTP + H(+) = Mo-molybdopterin guanine dinucleotide + diphosphate. In terms of biological role, transfers a GMP moiety from GTP to Mo-molybdopterin (Mo-MPT) cofactor (Moco or molybdenum cofactor) to form Mo-molybdopterin guanine dinucleotide (Mo-MGD) cofactor. The sequence is that of Probable molybdenum cofactor guanylyltransferase from Bacillus velezensis (strain DSM 23117 / BGSC 10A6 / LMG 26770 / FZB42) (Bacillus amyloliquefaciens subsp. plantarum).